The following is a 212-amino-acid chain: Probable GTP-binding protein EngB (212 aa).

The EngB-type G domain occupies 40–212; it reads SLPEIAFVGK…KASLAKCIKA (173 aa). GTP contacts are provided by residues 48–55, 75–79, 93–96, 160–163, and 191–193; these read GKSNVGKS, GRTRQ, DLPG, TKSD, and VSS. Mg(2+) is bound by residues serine 55 and threonine 77.

This sequence belongs to the TRAFAC class TrmE-Era-EngA-EngB-Septin-like GTPase superfamily. EngB GTPase family. It depends on Mg(2+) as a cofactor.

Its function is as follows. Necessary for normal cell division and for the maintenance of normal septation. The sequence is that of Probable GTP-binding protein EngB from Rickettsia akari (strain Hartford).